The sequence spans 299 residues: uncharacterized protein (299 aa).

Polar residues predominate over residues 1–10; that stretch reads MTSIIQSPPL. Disordered stretches follow at residues 1-30, 54-89, and 148-212; these read MTSI…NNNN, KLNN…INNN, and QDYT…SDYV. A compositionally biased stretch (low complexity) spans 56-89; it reads NNNNNNNNNNNNNNNNNNNNNNNNSSSNNNINNN. Composition is skewed to acidic residues over residues 150–169 and 177–212; these read YTDE…DEEE and ECEE…SDYV.

This is an uncharacterized protein from Dictyostelium discoideum (Social amoeba).